Consider the following 218-residue polypeptide: Ras-related protein Rab11E (218 aa).

GTP is bound at residue 20–27 (GDSGVGKS). The short motif at 42-50 (SKSTIGVEF) is the Effector region element. Residues 68-72 (DTAGQ) and 126-129 (NKSD) each bind GTP. 2 S-geranylgeranyl cysteine lipidation sites follow: Cys-215 and Cys-216.

Belongs to the small GTPase superfamily. Rab family.

It localises to the cell membrane. This chain is Ras-related protein Rab11E (RAB11E), found in Lotus japonicus (Lotus corniculatus var. japonicus).